A 289-amino-acid polypeptide reads, in one-letter code: Oxaloacetate decarboxylase 1 (289 aa).

Position 50 (S50) interacts with substrate. Residue D88 participates in Mg(2+) binding. Substrate is bound by residues R159 and H235.

It belongs to the isocitrate lyase/PEP mutase superfamily. Oxaloacetate decarboxylase family. As to quaternary structure, homotetramer; dimer of dimers. Requires Mg(2+) as cofactor.

The enzyme catalyses oxaloacetate + H(+) = pyruvate + CO2. Its function is as follows. Catalyzes the decarboxylation of oxaloacetate into pyruvate. Seems to play a role in maintaining cellular concentrations of bicarbonate and pyruvate. The polypeptide is Oxaloacetate decarboxylase 1 (Pseudomonas putida (strain W619)).